We begin with the raw amino-acid sequence, 149 residues long: Deoxyuridine 5'-triphosphate nucleotidohydrolase (149 aa).

Substrate contacts are provided by residues 68 to 70 (RSG), Asn81, and 85 to 87 (LID).

This sequence belongs to the dUTPase family. It depends on Mg(2+) as a cofactor.

It catalyses the reaction dUTP + H2O = dUMP + diphosphate + H(+). The protein operates within pyrimidine metabolism; dUMP biosynthesis; dUMP from dCTP (dUTP route): step 2/2. In terms of biological role, this enzyme is involved in nucleotide metabolism: it produces dUMP, the immediate precursor of thymidine nucleotides and it decreases the intracellular concentration of dUTP so that uracil cannot be incorporated into DNA. In Nitrosomonas eutropha (strain DSM 101675 / C91 / Nm57), this protein is Deoxyuridine 5'-triphosphate nucleotidohydrolase.